Here is a 309-residue protein sequence, read N- to C-terminus: Ribosomal protein L11 methyltransferase (309 aa).

4 residues coordinate S-adenosyl-L-methionine: T160, G181, D203, and N245.

This sequence belongs to the methyltransferase superfamily. PrmA family.

It localises to the cytoplasm. The enzyme catalyses L-lysyl-[protein] + 3 S-adenosyl-L-methionine = N(6),N(6),N(6)-trimethyl-L-lysyl-[protein] + 3 S-adenosyl-L-homocysteine + 3 H(+). In terms of biological role, methylates ribosomal protein L11. This chain is Ribosomal protein L11 methyltransferase, found in Caldanaerobacter subterraneus subsp. tengcongensis (strain DSM 15242 / JCM 11007 / NBRC 100824 / MB4) (Thermoanaerobacter tengcongensis).